Here is a 334-residue protein sequence, read N- to C-terminus: D-fructose 1,6-bisphosphatase class 2/sedoheptulose 1,7-bisphosphatase (334 aa).

Residues aspartate 33, glutamate 57, aspartate 85, and glutamate 88 each coordinate Mn(2+). Residues 88 to 90 (EGT), tyrosine 119, 164 to 166 (RAR), and 186 to 188 (DGD) each bind substrate. Glutamate 213 serves as a coordination point for Mn(2+).

The protein belongs to the FBPase class 2 family. Homotetramer. Requires Mn(2+) as cofactor.

It carries out the reaction beta-D-fructose 1,6-bisphosphate + H2O = beta-D-fructose 6-phosphate + phosphate. The catalysed reaction is D-sedoheptulose 1,7-bisphosphate + H2O = D-sedoheptulose 7-phosphate + phosphate. It functions in the pathway carbohydrate biosynthesis; Calvin cycle. Its function is as follows. Catalyzes the hydrolysis of fructose 1,6-bisphosphate (Fru 1,6-P2) and sedoheptulose 1,7-bisphosphate (Sed 1,7-P2) to fructose 6-phosphate and sedoheptulose 7-phosphate, respectively. This Prochlorococcus marinus (strain NATL1A) protein is D-fructose 1,6-bisphosphatase class 2/sedoheptulose 1,7-bisphosphatase.